The chain runs to 70 residues: MFTLKKSLLLLFFLGTINLSLCEEERNAEEERRDEPDEMNVEVEKRFLPLIAGLAANFLPKIFCAITKKC.

The first 22 residues, 1-22 (MFTLKKSLLLLFFLGTINLSLC), serve as a signal peptide directing secretion. A propeptide spanning residues 23 to 44 (EEERNAEEERRDEPDEMNVEVE) is cleaved from the precursor. A disulfide bridge connects residues Cys-64 and Cys-70.

As to expression, expressed by the skin glands.

Its subcellular location is the secreted. Antimicrobial peptide. The sequence is that of Brevinin-1Vb from Odorrana versabilis (Chinese bamboo leaf odorous frog).